The primary structure comprises 159 residues: Phosphopantetheine adenylyltransferase (159 aa).

Threonine 10 contributes to the substrate binding site. ATP-binding positions include 10–11 and histidine 18; that span reads TF. The substrate site is built by lysine 42, methionine 74, and arginine 88. Residues 89–91, glutamate 99, and 124–130 contribute to the ATP site; these read GLR and WSFISSS.

This sequence belongs to the bacterial CoaD family. Homohexamer. Requires Mg(2+) as cofactor.

The protein resides in the cytoplasm. It carries out the reaction (R)-4'-phosphopantetheine + ATP + H(+) = 3'-dephospho-CoA + diphosphate. It participates in cofactor biosynthesis; coenzyme A biosynthesis; CoA from (R)-pantothenate: step 4/5. In terms of biological role, reversibly transfers an adenylyl group from ATP to 4'-phosphopantetheine, yielding dephospho-CoA (dPCoA) and pyrophosphate. This is Phosphopantetheine adenylyltransferase from Citrobacter koseri (strain ATCC BAA-895 / CDC 4225-83 / SGSC4696).